Reading from the N-terminus, the 432-residue chain is Adenylosuccinate synthetase (432 aa).

GTP-binding positions include 12–18 and 40–42; these read GDEGKGK and GHT. Residue aspartate 13 is the Proton acceptor of the active site. Positions 13 and 40 each coordinate Mg(2+). IMP is bound by residues 13–16, 38–41, threonine 132, arginine 146, glutamine 226, threonine 241, and arginine 305; these read DEGK and NAGH. Histidine 41 functions as the Proton donor in the catalytic mechanism. Substrate is bound at residue 301 to 307; the sequence is VVTGRKR. GTP-binding positions include arginine 307, 333-335, and 415-417; these read KLD and STS.

This sequence belongs to the adenylosuccinate synthetase family. As to quaternary structure, homodimer. Mg(2+) is required as a cofactor.

The protein resides in the cytoplasm. It carries out the reaction IMP + L-aspartate + GTP = N(6)-(1,2-dicarboxyethyl)-AMP + GDP + phosphate + 2 H(+). It participates in purine metabolism; AMP biosynthesis via de novo pathway; AMP from IMP: step 1/2. Functionally, plays an important role in the de novo pathway of purine nucleotide biosynthesis. Catalyzes the first committed step in the biosynthesis of AMP from IMP. The polypeptide is Adenylosuccinate synthetase (Rhizobium etli (strain CIAT 652)).